Consider the following 1065-residue polypeptide: WD repeat-containing protein on Y chromosome (1065 aa).

WD repeat units follow at residues 153–197 (EEVT…IRTA), 326–365 (RVPLGVSTFFVAESHNIVVTGGPDTFVRIWDVYIPTEPSA), 369–408 (GHNGGIVMVFVQPEENKVYSVDYQKIIKVWDLQEHTLLQT), 459–498 (THAAPVSVVLYNRLFRNIVTCGLDSYIIVWDPWSGRRKII), 511–550 (IIDIEITAATFDPLEQFLLTGARDGTLKIWNYNNAVVVRN), 598–638 (FHTD…RRYS), 745–784 (KTGDCVLTMCTDRKNRYIYTGTAFGYIKVWHIVNYCVPEA), and 828–867 (AHLKAINSIAFINLPKIVFSGSHDYSCRLWTQGGRYLGTL). Positions 915–925 (PAKRAEVKAPE) are enriched in basic and acidic residues. Disordered stretches follow at residues 915–936 (PAKRAEVKAPEDRDEETAQTDD) and 1024–1065 (GSAL…QQSE). Positions 926–936 (DRDEETAQTDD) are enriched in acidic residues.

This is WD repeat-containing protein on Y chromosome from Drosophila persimilis (Fruit fly).